A 208-amino-acid polypeptide reads, in one-letter code: Small ribosomal subunit protein uS4 (208 aa).

In terms of domain architecture, S4 RNA-binding spans 98–160; it reads CRLDNVVYRM…AKKQSRIQLA (63 aa).

The protein belongs to the universal ribosomal protein uS4 family. In terms of assembly, part of the 30S ribosomal subunit. Contacts protein S5. The interaction surface between S4 and S5 is involved in control of translational fidelity.

One of the primary rRNA binding proteins, it binds directly to 16S rRNA where it nucleates assembly of the body of the 30S subunit. In terms of biological role, with S5 and S12 plays an important role in translational accuracy. This Ruthia magnifica subsp. Calyptogena magnifica protein is Small ribosomal subunit protein uS4.